The following is a 481-amino-acid chain: Zinc metalloproteinase/disintegrin (481 aa).

Positions 1–20 (MIQVLLVTICLAVFPYQGSS) are cleaved as a signal peptide. Residues 21-190 (IILESGNVDD…KASQLYLTPE (170 aa)) constitute a propeptide that is removed on maturation. The 196-residue stretch at 197–392 (RYIKLAIVVD…DNPQCILNAP (196 aa)) folds into the Peptidase M12B domain. 3 disulfides stabilise this stretch: Cys-308-Cys-387, Cys-349-Cys-371, and Cys-351-Cys-354. His-333 is a binding site for Zn(2+). Residue Glu-334 is part of the active site. Zn(2+) contacts are provided by His-337 and His-343. Residues 393-408 (LRTDTVSTPVSGNEFL) constitute a propeptide that is removed on maturation. The 82-residue stretch at 400–481 (TPVSGNEFLE…GDCPRNPFHA (82 aa)) folds into the Disintegrin domain. 6 disulfide bridges follow: Cys-414–Cys-429, Cys-416–Cys-424, Cys-423–Cys-446, Cys-437–Cys-443, Cys-442–Cys-467, and Cys-455–Cys-474. The Cell attachment site signature appears at 459 to 461 (RGD).

It belongs to the venom metalloproteinase (M12B) family. P-II subfamily. P-IIa sub-subfamily. As to quaternary structure, monomer. Requires Zn(2+) as cofactor. In terms of tissue distribution, expressed by the venom gland.

It localises to the secreted. In terms of biological role, impairs hemostasis in the envenomed animal. Its function is as follows. Disintegrin elegantin-2a-f: inhibits platelet aggregation induced by ADP, thrombin, platelet-activating factor and collagen. Acts by inhibiting fibrinogen interaction with platelet receptors GPIIb/GPIIIa (ITGA2B/ITGB3). The sequence is that of Zinc metalloproteinase/disintegrin from Protobothrops elegans (Elegant pitviper).